Reading from the N-terminus, the 199-residue chain is MYEGAVQNLIDELGRLPGVGPKSAQRIAFHLLAAETADVHRLVNALVAVKERVRFCAVCGNIAEETQCRICRDPRRDDTVICVVEEPKDVVAIERTREFRGRYHVLGGAISPIEGVGPDDLRVKELMARLSEGRVTEVILATDPNLEGEATATYLARLLKPMGLKVTRLASGLPVGGDLEYADEVTLGRAFEGRRALDF.

A C4-type zinc finger spans residues 56–71; sequence CAVCGNIAEETQCRIC. The Toprim domain occupies 79-174; it reads TVICVVEEPK…KVTRLASGLP (96 aa).

This sequence belongs to the RecR family.

Functionally, may play a role in DNA repair. It seems to be involved in an RecBC-independent recombinational process of DNA repair. It may act with RecF and RecO. The protein is Recombination protein RecR of Thermobifida fusca (strain YX).